A 204-amino-acid polypeptide reads, in one-letter code: Dual specificity protein phosphatase 18 (204 aa).

In terms of domain architecture, Tyrosine-protein phosphatase spans Gly-19 to Gly-160. Residues Met-95–Ile-141 form a sufficient for mitochondrial localization region. Catalysis depends on Cys-104, which acts as the Phosphocysteine intermediate.

The protein belongs to the protein-tyrosine phosphatase family. Non-receptor class dual specificity subfamily.

The protein localises to the cytoplasm. The protein resides in the nucleus. Its subcellular location is the mitochondrion inner membrane. The enzyme catalyses O-phospho-L-tyrosyl-[protein] + H2O = L-tyrosyl-[protein] + phosphate. It carries out the reaction O-phospho-L-seryl-[protein] + H2O = L-seryl-[protein] + phosphate. The catalysed reaction is O-phospho-L-threonyl-[protein] + H2O = L-threonyl-[protein] + phosphate. Functionally, can dephosphorylate single and diphosphorylated synthetic MAPK peptides, with preference for the phosphotyrosine and diphosphorylated forms over phosphothreonine. In vitro, dephosphorylates p-nitrophenyl phosphate (pNPP). In Rattus norvegicus (Rat), this protein is Dual specificity protein phosphatase 18 (Dusp18).